The primary structure comprises 1044 residues: Sarcoplasmic/endoplasmic reticulum calcium ATPase 2 (1044 aa).

The Cytoplasmic segment spans residues 1 to 48 (MENAHTKTVEEVLGHFGVNESTGLSLEQVKKLKERWGSNELPAEEGKT). S38 is modified (phosphoserine). Residues 49 to 69 (LLELVIEQFEDLLVRILLLAA) form a helical membrane-spanning segment. The Lumenal portion of the chain corresponds to 70-89 (CISFVLAWFEEGEETITAFV). The chain crosses the membrane as a helical span at residues 90 to 110 (EPFVILLILVANAIVGVWQER). At 111 to 253 (NAENAIEALK…QERTPLQQKL (143 aa)) the chain is on the cytoplasmic side. A helical transmembrane segment spans residues 254–273 (DEFGEQLSKVISLICIAVWI). The Lumenal segment spans residues 274-295 (INIGHFNDPVHGGSWIRGAIYY). 3'-nitrotyrosine is present on residues Y294 and Y295. Residues 296 to 313 (FKIAVALAVAAIPEGLPA) form a helical membrane-spanning segment. Ca(2+) contacts are provided by V304, A305, I307, and E309. Over 314–756 (VITTCLALGT…EEGRAIYNNM (443 aa)) the chain is Cytoplasmic. The active-site 4-aspartylphosphate intermediate is the D351. Mg(2+)-binding residues include D351 and T353. T353 serves as a coordination point for ATP. Position 441 is a phosphothreonine (T441). E442, R489, and K514 together coordinate ATP. S531 bears the Phosphoserine mark. R559 is a binding site for ATP. Positions 575 to 594 (MHLEDSANFIKYETNLTFVG) are interaction with HAX1. Position 580 is a phosphoserine (S580). ATP-binding residues include T624, G625, and D626. S661 and S663 each carry phosphoserine. The ATP site is built by R677 and K683. Residue D702 participates in Mg(2+) binding. Position 705 (N705) interacts with ATP. The chain crosses the membrane as a helical span at residues 757 to 776 (KQFIRYLISSNVGEVVCIFL). Residues N767 and E770 each coordinate Ca(2+). At 777–786 (TAALGFPEAL) the chain is on the lumenal side. A helical membrane pass occupies residues 787–807 (IPVQLLWVNLVTDGLPATALG). Residues 787-807 (IPVQLLWVNLVTDGLPATALG) are interaction with PLN. Residues 788 to 1044 (PVQLLWVNLV…DTNFSDMFWS (257 aa)) are interaction with TMEM64 and PDIA3. Ca(2+)-binding residues include N795, T798, and D799. At 808-827 (FNPPDLDIMNKPPRNPKEPL) the chain is on the cytoplasmic side. Residues 828 to 850 (ISGWLFFRYLAIGCYVGAATVGA) form a helical membrane-spanning segment. The Lumenal segment spans residues 851–896 (AAWWFIAADGGPRVSFYQLSHFLQCKEDNPDFDGVDCAIFESPYPM). A disulfide bond links C875 and C887. Residues 897–916 (TMALSVLVTIEMCNALNSLS) form a helical membrane-spanning segment. A Ca(2+)-binding site is contributed by E907. Residues 917–929 (ENQSLLRMPPWEN) lie on the Cytoplasmic side of the membrane. The helical transmembrane segment at 930-948 (IWLVGSICLSMSLHFLILY) threads the bilayer. Residues 931 to 942 (WLVGSICLSMSL) form an interaction with PLN region. The Lumenal segment spans residues 949–963 (VEPLPLIFQITPLNL). Residues 964 to 984 (TQWLMVLKISLPVILMDETLK) form a helical membrane-spanning segment. Residues 985–1044 (FVARNYLEQPGKECVQPATKSSCSLSACTDGISWPFVLLIMPLVVWVYSTDTNFSDMFWS) lie on the Cytoplasmic side of the membrane.

The protein belongs to the cation transport ATPase (P-type) (TC 3.A.3) family. Type IIA subfamily. Interacts with sarcolipin (SLN); the interaction inhibits ATP2A2 Ca(2+) affinity. Interacts with phospholamban (PLN); the interaction inhibits ATP2A2 Ca(2+) affinity. Interacts with myoregulin (MRLN). Interacts with ARLN and ERLN; the interactions inhibit ATP2A2 Ca(2+) affinity. Interacts with STRIT1/DWORF; the interaction results in activation of ATP2A2. Interacts with the monomeric forms of SLN, PLN, ARLN, ERLN and STRI1/DWORF. Interacts with HAX1. Interacts with S100A8 and S100A9. Interacts with SLC35G1 and STIM1. Interacts with TMEM203. Interacts with TMEM64 and PDIA3. Interacts with TMX1. Interacts with TMX2. Interacts with VMP1; VMP1 competes with PLN and SLN to prevent them from forming an inhibitory complex with ATP2A2. Interacts with ULK1. Interacts with S100A1 in a Ca(2+)-dependent manner. Interacts with TUNAR. Interacts with FLVCR2; this interaction occurs in the absence of heme and promotes ATP2A2 proteasomal degradation; this complex is dissociated upon heme binding. Interacts with FNIP1. In terms of assembly, interacts with TRAM2 (via C-terminus). It depends on Mg(2+) as a cofactor. Nitrated under oxidative stress. Nitration on the two tyrosine residues inhibits catalytic activity. Post-translationally, serotonylated on Gln residues by TGM2 in response to hypoxia, leading to its inactivation. As to expression, isoform 2 is highly expressed in heart and slow twitch skeletal muscle. Isoform 2 is widely expressed.

The protein resides in the endoplasmic reticulum membrane. The protein localises to the sarcoplasmic reticulum membrane. The catalysed reaction is Ca(2+)(in) + ATP + H2O = Ca(2+)(out) + ADP + phosphate + H(+). Has different conformational states with differential Ca2+ affinity. The E1 conformational state (active form) shows high Ca(2+) affinity, while the E2 state exhibits low Ca(2+) affinity. Binding of ATP allosterically increases its affinity for subsequent binding of Ca2+. Reversibly inhibited by phospholamban (PLN) at low calcium concentrations. PLN inhibits ATP2A2 Ca(2+) affinity by disrupting its allosteric activation by ATP. Inhibited by sarcolipin (SLN) and myoregulin (MRLN). The inhibition is blocked by VMP1. Enhanced by STRIT1/DWORF; STRIT1 increases activity by displacing sarcolipin (SLN), phospholamban (PLN) and myoregulin (MRLN). Stabilizes SERCA2 in its E2 state. In terms of biological role, this magnesium-dependent enzyme catalyzes the hydrolysis of ATP coupled with the translocation of calcium from the cytosol to the sarcoplasmic reticulum lumen. Involved in autophagy in response to starvation. Upon interaction with VMP1 and activation, controls ER-isolation membrane contacts for autophagosome formation. Also modulates ER contacts with lipid droplets, mitochondria and endosomes. In coordination with FLVCR2 mediates heme-stimulated switching from mitochondrial ATP synthesis to thermogenesis. Functionally, involved in the regulation of the contraction/relaxation cycle. Acts as a regulator of TNFSF11-mediated Ca(2+) signaling pathways via its interaction with TMEM64 which is critical for the TNFSF11-induced CREB1 activation and mitochondrial ROS generation necessary for proper osteoclast generation. Association between TMEM64 and SERCA2 in the ER leads to cytosolic Ca(2+) spiking for activation of NFATC1 and production of mitochondrial ROS, thereby triggering Ca(2+) signaling cascades that promote osteoclast differentiation and activation. This Mus musculus (Mouse) protein is Sarcoplasmic/endoplasmic reticulum calcium ATPase 2.